A 740-amino-acid chain; its full sequence is Catalase-peroxidase (740 aa).

The signal sequence occupies residues 1 to 27 (MFKSTLPIAAAISVALTSMVLPAKALA). The segment at residues 106-228 (WHSAGVYRVH…LAAVEMGLIY (123 aa)) is a cross-link (tryptophyl-tyrosyl-methioninium (Trp-Tyr) (with M-254)). Residue His-107 is the Proton acceptor of the active site. Positions 228-254 (YVNPEGPHGKPDPLLAANDIRMSFGRM) form a cross-link, tryptophyl-tyrosyl-methioninium (Tyr-Met) (with W-106). His-269 is a heme b binding site.

Belongs to the peroxidase family. Peroxidase/catalase subfamily. Homodimer or homotetramer. The cofactor is heme b. In terms of processing, formation of the three residue Trp-Tyr-Met cross-link is important for the catalase, but not the peroxidase activity of the enzyme.

The catalysed reaction is H2O2 + AH2 = A + 2 H2O. It catalyses the reaction 2 H2O2 = O2 + 2 H2O. Functionally, bifunctional enzyme with both catalase and broad-spectrum peroxidase activity. The protein is Catalase-peroxidase of Colwellia psychrerythraea (strain 34H / ATCC BAA-681) (Vibrio psychroerythus).